The chain runs to 989 residues: E3 ubiquitin-protein ligase Arkadia (989 aa).

Residues K19, K33, K46, K58, K72, K86, K95, and K109 each participate in a glycyl lysine isopeptide (Lys-Gly) (interchain with G-Cter in SUMO2) cross-link. The tract at residues 63–195 (FSHLCDDSQK…TEADPVPSLL (133 aa)) is disordered. The span at 65–88 (HLCDDSQKQEKDMTGNQQEQEKSG) shows a compositional bias: basic and acidic residues. Positions 97–109 (QQAGPSYVQNCVK) are enriched in polar residues. Residues 110–120 (ENQEILGRRQQ) show a composition bias toward basic and acidic residues. Low complexity predominate over residues 131 to 144 (SSLSECLSSPSSSL). A Glycyl lysine isopeptide (Lys-Gly) (interchain with G-Cter in SUMO2) cross-link involves residue K172. The segment covering 173–183 (SRSHSARSHKW) has biased composition (basic residues). Residues K197 and K217 each participate in a glycyl lysine isopeptide (Lys-Gly) (interchain with G-Cter in SUMO2) cross-link. A disordered region spans residues 213-293 (KRLVKSSSSQ…PSNPAAPSGS (81 aa)). Positions 240–402 (ALAQRKYALL…VPTTSARMDS (163 aa)) are interaction with AXIN1. Composition is skewed to low complexity over residues 248–270 (LLSS…SSST) and 278–291 (ASAS…AAPS). The short motif at 298-302 (VVVIE) is the SUMO interaction motif 1 (SIM) element. The SUMO interaction motif 2 (SIM) motif lies at 323 to 329 (EVEIVTV). Residues 335–367 (SRSTLGHSRSHWSQGSSSHTGRPQESRNRSRIS) are disordered. The segment covering 345–355 (HWSQGSSSHTG) has biased composition (low complexity). Residues 380 to 384 (VVDLT) carry the SUMO interaction motif 3 (SIM) motif. 3 disordered regions span residues 388 to 475 (DEPT…MPRL), 506 to 559 (HGHH…YHDQ), and 641 to 675 (MPPP…PPPQ). The span at 393-451 (VPTTSARMDSQTTSASINNSNPSTSEQASDTTSTVASSQPSTVSETEATLTSNSATGSS) shows a compositional bias: polar residues. The segment covering 506 to 520 (HGHHFQHHHHHHHTP) has biased composition (basic residues). Polar residues predominate over residues 548–558 (ANSSSGSSYHD). The ubiquitin binding stretch occupies residues 902 to 904 (YPH). Residues K918 and K922 each participate in a glycyl lysine isopeptide (Lys-Gly) (interchain with G-Cter in SUMO2) cross-link. Zn(2+)-binding residues include C937 and C940. The RING-type; atypical zinc-finger motif lies at 937 to 978 (CTICLSILEEGEDVRRLPCMHLFHQVCVDQWLITNKKCPICR). The tract at residues 952-956 (RLPCM) is ubiquitin binding. H960 and C963 together coordinate Zn(2+).

The protein belongs to the Arkadia family. Monomer. Interacts with SMAD6, SMAD7, AXIN1, AXIN2 and SKIL isoform SNON. Interacts with (phosphorylated) SMAD2 and SMAD3. Part of a complex containing RNF111, AXIN1 and SMAD7. Interacts (via SIM domains) with SUMO1 and SUMO2. In terms of tissue distribution, ubiquitously expressed.

It is found in the nucleus. Its subcellular location is the cytoplasm. The protein localises to the PML body. The catalysed reaction is S-ubiquitinyl-[E2 ubiquitin-conjugating enzyme]-L-cysteine + [acceptor protein]-L-lysine = [E2 ubiquitin-conjugating enzyme]-L-cysteine + N(6)-ubiquitinyl-[acceptor protein]-L-lysine.. The protein operates within protein modification; protein ubiquitination. Binds free ubiquitin non-covalently via its RING-type zinc finger. Ubiquitin-binding leads to enhance the E3 ubiquitin-protein ligase activity by stabilizing the ubiquitin-conjugating enzyme E2 (donor ubiquitin) in the 'closed' conformation and activating ubiquitin transfer. Its function is as follows. E3 ubiquitin-protein ligase required for mesoderm patterning during embryonic development. Acts as an enhancer of the transcriptional responses of the SMAD2/SMAD3 effectors, which are activated downstream of BMP. Acts by mediating ubiquitination and degradation of SMAD inhibitors such as SMAD7, inducing their proteasomal degradation and thereby enhancing the transcriptional activity of TGF-beta and BMP. In addition to enhance transcription of SMAD2/SMAD3 effectors, also regulates their turnover by mediating their ubiquitination and subsequent degradation, coupling their activation with degradation, thereby ensuring that only effectors 'in use' are degraded. Activates SMAD3/SMAD4-dependent transcription by triggering signal-induced degradation of SNON isoform of SKIL. Associates with UBE2D2 as an E2 enzyme. Specifically binds polysumoylated chains via SUMO interaction motifs (SIMs) and mediates ubiquitination of sumoylated substrates. Catalyzes 'Lys-63'-linked ubiquitination of sumoylated XPC in response to UV irradiation, promoting nucleotide excision repair. Mediates ubiquitination and degradation of sumoylated PML. The regulation of the BMP-SMAD signaling is however independent of sumoylation and is not dependent of SUMO interaction motifs (SIMs). In Mus musculus (Mouse), this protein is E3 ubiquitin-protein ligase Arkadia.